We begin with the raw amino-acid sequence, 285 residues long: (2Z,6Z)-farnesyl diphosphate synthase CPT6, chloroplastic (285 aa).

Residues 1-30 (MNSLFVGRPIVKSSYNVYTLPSSICGGHFF) constitute a chloroplast transit peptide. Residue Asp65 is part of the active site.

Belongs to the UPP synthase family. The cofactor is Mg(2+). In terms of tissue distribution, expressed in roots and red fruits.

It localises to the plastid. The protein resides in the chloroplast. It catalyses the reaction 2 isopentenyl diphosphate + dimethylallyl diphosphate = (2Z,6Z)-farnesyl diphosphate + 2 diphosphate. It carries out the reaction isopentenyl diphosphate + dimethylallyl diphosphate = neryl diphosphate + diphosphate. The catalysed reaction is neryl diphosphate + isopentenyl diphosphate = (2Z,6Z)-farnesyl diphosphate + diphosphate. In terms of biological role, uses neryl diphosphate to catalyze the cis-prenyl chain elongation and produce the 15 carbon product (2Z,6Z)-farnesyl diphosphate. The chain is (2Z,6Z)-farnesyl diphosphate synthase CPT6, chloroplastic from Solanum lycopersicum (Tomato).